The primary structure comprises 444 residues: 3-phosphoshikimate 1-carboxyvinyltransferase (444 aa).

Lys-32, Ser-33, and Arg-37 together coordinate 3-phosphoshikimate. Lys-32 contributes to the phosphoenolpyruvate binding site. Phosphoenolpyruvate contacts are provided by Gly-105 and Arg-133. 3-phosphoshikimate is bound by residues Ser-178, Gln-180, Asp-326, and Lys-353. Gln-180 is a phosphoenolpyruvate binding site. Asp-326 serves as the catalytic Proton acceptor. Arg-357 and Arg-398 together coordinate phosphoenolpyruvate.

Belongs to the EPSP synthase family. As to quaternary structure, monomer.

The protein resides in the cytoplasm. The enzyme catalyses 3-phosphoshikimate + phosphoenolpyruvate = 5-O-(1-carboxyvinyl)-3-phosphoshikimate + phosphate. Its pathway is metabolic intermediate biosynthesis; chorismate biosynthesis; chorismate from D-erythrose 4-phosphate and phosphoenolpyruvate: step 6/7. Functionally, catalyzes the transfer of the enolpyruvyl moiety of phosphoenolpyruvate (PEP) to the 5-hydroxyl of shikimate-3-phosphate (S3P) to produce enolpyruvyl shikimate-3-phosphate and inorganic phosphate. This is 3-phosphoshikimate 1-carboxyvinyltransferase from Nitrosococcus oceani (strain ATCC 19707 / BCRC 17464 / JCM 30415 / NCIMB 11848 / C-107).